A 224-amino-acid chain; its full sequence is MKPQDLKVPFFWEERSTKIKDNVLYVPEHYFKHHQFIMPSWEEFFGNDNPISCELCSGNGDWVVAQAKETPEVNWIAVEKRFDRVRKIWSKMHNCRVTNLRIVCGDAQTFFLHYLGEAVVQRIIVNFPDPWPKSRHRKHRLFQDEFLNNVVRVLTEPGILILATDDKNYLLQAIQIMRQYLSPTMEDPYYCEVENYGNSWFETLWRSKGREIFYTEFVKKLGYS.

Residues E54, E79, D106, and D129 each coordinate S-adenosyl-L-methionine. The active site involves D129. Residues K133 and D165 each contribute to the substrate site.

Belongs to the class I-like SAM-binding methyltransferase superfamily. TrmB family.

The catalysed reaction is guanosine(46) in tRNA + S-adenosyl-L-methionine = N(7)-methylguanosine(46) in tRNA + S-adenosyl-L-homocysteine. It participates in tRNA modification; N(7)-methylguanine-tRNA biosynthesis. Catalyzes the formation of N(7)-methylguanine at position 46 (m7G46) in tRNA. The chain is tRNA (guanine-N(7)-)-methyltransferase from Chlamydia felis (strain Fe/C-56) (Chlamydophila felis).